Reading from the N-terminus, the 363-residue chain is uncharacterized protein (363 aa).

The S-adenosyl-L-methionine site is built by Gln-198, Tyr-225, Glu-246, and Asp-291. The active-site Nucleophile is Cys-318.

The protein belongs to the class I-like SAM-binding methyltransferase superfamily. RNA M5U methyltransferase family.

This is an uncharacterized protein from Mycoplasma mobile (strain ATCC 43663 / 163K / NCTC 11711) (Mesomycoplasma mobile).